A 723-amino-acid chain; its full sequence is Polyribonucleotide nucleotidyltransferase (723 aa).

Residues D488 and D494 each contribute to the Mg(2+) site. Residues 555–614 (PKIITLNIKPEKIKDVIGPGGKQINAIIDETGVKIDIEQDGTVYIASQDQAMNRKAIAII) form the KH domain. Residues 624–692 (GEVYTGKVRR…QQGRVNLSRK (69 aa)) enclose the S1 motif domain. Positions 692 to 723 (KALLEKKEQPEGDKKPQAEKKFYPKTKKPESK) are disordered. Residues 693 to 723 (ALLEKKEQPEGDKKPQAEKKFYPKTKKPESK) are compositionally biased toward basic and acidic residues.

The protein belongs to the polyribonucleotide nucleotidyltransferase family. Requires Mg(2+) as cofactor.

Its subcellular location is the cytoplasm. The enzyme catalyses RNA(n+1) + phosphate = RNA(n) + a ribonucleoside 5'-diphosphate. Involved in mRNA degradation. Catalyzes the phosphorolysis of single-stranded polyribonucleotides processively in the 3'- to 5'-direction. This Listeria monocytogenes serotype 4a (strain HCC23) protein is Polyribonucleotide nucleotidyltransferase.